The sequence spans 85 residues: Elongation factor 1-beta (85 aa).

Belongs to the EF-1-beta/EF-1-delta family.

In terms of biological role, promotes the exchange of GDP for GTP in EF-1-alpha/GDP, thus allowing the regeneration of EF-1-alpha/GTP that could then be used to form the ternary complex EF-1-alpha/GTP/AAtRNA. The protein is Elongation factor 1-beta of Methanoregula boonei (strain DSM 21154 / JCM 14090 / 6A8).